The chain runs to 630 residues: Biosynthetic arginine decarboxylase (630 aa).

Lys99 bears the N6-(pyridoxal phosphate)lysine mark. 281-291 is a substrate binding site; the sequence is VDIGGGLGVDY.

The protein belongs to the Orn/Lys/Arg decarboxylase class-II family. SpeA subfamily. Mg(2+) serves as cofactor. Pyridoxal 5'-phosphate is required as a cofactor.

The enzyme catalyses L-arginine + H(+) = agmatine + CO2. It participates in amine and polyamine biosynthesis; agmatine biosynthesis; agmatine from L-arginine: step 1/1. In terms of biological role, catalyzes the biosynthesis of agmatine from arginine. The sequence is that of Biosynthetic arginine decarboxylase from Bacteroides fragilis (strain ATCC 25285 / DSM 2151 / CCUG 4856 / JCM 11019 / LMG 10263 / NCTC 9343 / Onslow / VPI 2553 / EN-2).